The chain runs to 444 residues: Acyl-CoA 6-desaturase (444 aa).

The Cytoplasmic portion of the chain corresponds to 1-130; sequence MGKGGNQGEG…EDMNLFKTNH (130 aa). The region spanning 18–95 is the Cytochrome b5 heme-binding domain; that stretch reads MPTFRWEEIQ…LKPLLIGELA (78 aa). Residues 131 to 151 form a helical membrane-spanning segment; sequence LFFFLLLSHIIVMESIAWFIL. Topologically, residues 152-157 are lumenal; that stretch reads SYFGNG. The helical transmembrane segment at 158–178 threads the bilayer; sequence WIPTVITAFVLATSQAQAGWL. At 179–264 the chain is on the cytoplasmic side; it reads QHDYGHLSVY…KYLPYNHQHE (86 aa). The short motif at 180–184 is the Histidine box-1 element; it reads HDYGH. The Histidine box-2 signature appears at 217–221; the sequence is HFQHH. The helical transmembrane segment at 265–285 threads the bilayer; it reads YFFLIGPPLLIPMYFQYQIIM. Residues 286–305 lie on the Lumenal side of the membrane; sequence TMIRRRDWVDLAWAISYYAR. A helical membrane pass occupies residues 306 to 326; the sequence is FFYTYIPFYGILGALVFLNFI. Topologically, residues 327–444 are cytoplasmic; it reads RFLESHWFVW…ELWLDAYLHK (118 aa). Positions 382–386 match the Histidine box-3 motif; sequence QIEHH.

This sequence belongs to the fatty acid desaturase type 1 family. As to expression, expressed in the liver and brain (at protein level). Highest activity is found in the liver and adrenals followed by the testes and other organs, absent in adipose tissue.

The protein resides in the endoplasmic reticulum membrane. It localises to the microsome membrane. The enzyme catalyses (9Z,12Z)-octadecadienoyl-CoA + 2 Fe(II)-[cytochrome b5] + O2 + 2 H(+) = (6Z,9Z,12Z)-octadecatrienoyl-CoA + 2 Fe(III)-[cytochrome b5] + 2 H2O. It catalyses the reaction (9Z,12Z,15Z)-octadecatrienoyl-CoA + 2 Fe(II)-[cytochrome b5] + O2 + 2 H(+) = (6Z,9Z,12Z,15Z)-octadecatetraenoyl-CoA + 2 Fe(III)-[cytochrome b5] + 2 H2O. It carries out the reaction (9Z,12Z,15Z,18Z,21Z)-tetracosapentaenoyl-CoA + 2 Fe(II)-[cytochrome b5] + O2 + 2 H(+) = (6Z,9Z,12Z,15Z,18Z,21Z)-tetracosahexaenoyl-CoA + 2 Fe(III)-[cytochrome b5] + 2 H2O. The catalysed reaction is (11E)-octadecenoyl-CoA + 2 Fe(II)-[cytochrome b5] + O2 + 2 H(+) = (6Z,11E)-octadecadienoyl-CoA + 2 Fe(III)-[cytochrome b5] + 2 H2O. The enzyme catalyses (11Z,14Z)-eicosadienoyl-CoA + 2 Fe(II)-[cytochrome b5] + O2 + 2 H(+) = (8Z,11Z,14Z)-eicosatrienoyl-CoA + 2 Fe(III)-[cytochrome b5] + 2 H2O. It catalyses the reaction (11Z,14Z,17Z)-eicosatrienoyl-CoA + 2 Fe(II)-[cytochrome b5] + O2 + 2 H(+) = (8Z,11Z,14Z,17Z)-eicosatetraenoyl-CoA + 2 Fe(III)-[cytochrome b5] + 2 H2O. The protein operates within lipid metabolism; polyunsaturated fatty acid biosynthesis. Functionally, involved in the biosynthesis of highly unsaturated fatty acids (HUFA) from the essential polyunsaturated fatty acids (PUFA) linoleic acid (LA) (18:2n-6) and alpha-linolenic acid (ALA) (18:3n-3) precursors, acting as a fatty acyl-coenzyme A (CoA) desaturase that introduces a cis double bond at carbon 6 of the fatty acyl chain. Catalyzes the first and rate limiting step in this pathway which is the desaturation of LA (18:2n-6) and ALA (18:3n-3) into gamma-linoleate (GLA) (18:3n-6) and stearidonate (18:4n-3), respectively. Subsequently, in the biosynthetic pathway of HUFA n-3 series, it desaturates tetracosapentaenoate (24:5n-3) to tetracosahexaenoate (24:6n-3), which is then converted to docosahexaenoate (DHA)(22:6n-3), an important lipid for nervous system function. It can also desaturate (11E)-octadecenoate (trans-vaccenoate) at carbon 6 generating (6Z,11E)-octadecadienoate. In addition to Delta-6 activity, this enzyme exhibits Delta-8 activity with slight biases toward n-3 fatty acyl-CoA substrates. The polypeptide is Acyl-CoA 6-desaturase (Fads2) (Rattus norvegicus (Rat)).